We begin with the raw amino-acid sequence, 241 residues long: Glutathione S-transferase omega-1 (241 aa).

Residue serine 2 is modified to N-acetylserine. The GST N-terminal domain occupies 22 to 101 (GQIRVYSMRF…YLDEAYPEKK (80 aa)). Cysteine 32 (nucleophile) is an active-site residue. Lysine 57 bears the N6-acetyllysine mark. Residues lysine 59, valine 72, and 85–86 (ES) each bind glutathione. The region spanning 106–228 (DPYEKACQKM…AKTYRDYLSL (123 aa)) is the GST C-terminal domain. Serine 129 is subject to Phosphoserine. An N6-acetyllysine mark is found at lysine 143, lysine 148, and lysine 152.

It belongs to the GST superfamily. Omega family. In terms of assembly, homodimer.

Its subcellular location is the cytoplasm. The protein resides in the cytosol. It carries out the reaction RX + glutathione = an S-substituted glutathione + a halide anion + H(+). The enzyme catalyses L-dehydroascorbate + 2 glutathione = glutathione disulfide + L-ascorbate. The catalysed reaction is methylarsonate + 2 glutathione + H(+) = methylarsonous acid + glutathione disulfide + H2O. Functionally, exhibits glutathione-dependent thiol transferase and dehydroascorbate reductase activities. Has S-(phenacyl)glutathione reductase activity. Also has glutathione S-transferase activity. Participates in the biotransformation of inorganic arsenic and reduces monomethylarsonic acid (MMA) and dimethylarsonic acid. This Rattus norvegicus (Rat) protein is Glutathione S-transferase omega-1 (Gsto1).